Here is a 524-residue protein sequence, read N- to C-terminus: Probable glutamyl-tRNA reductase 3, chloroplastic (524 aa).

A chloroplast-targeting transit peptide spans 1-52 (MAVSNASVVLSPNLETSSSWYHHNPSSSLDLIRIHTLPMNKMTRRGLIQRVR). Substrate-binding positions include 129–132 (TCNR), S189, 194–196 (ENQ), and Q200. C130 (nucleophile) is an active-site residue. 269 to 274 (GAGEMG) is a binding site for NADP(+).

It belongs to the glutamyl-tRNA reductase family.

The protein resides in the plastid. It localises to the chloroplast. The catalysed reaction is (S)-4-amino-5-oxopentanoate + tRNA(Glu) + NADP(+) = L-glutamyl-tRNA(Glu) + NADPH + H(+). It functions in the pathway porphyrin-containing compound metabolism; protoporphyrin-IX biosynthesis; 5-aminolevulinate from L-glutamyl-tRNA(Glu): step 1/2. It participates in porphyrin-containing compound metabolism; chlorophyll biosynthesis. Functionally, catalyzes the NADPH-dependent reduction of glutamyl-tRNA(Glu) to glutamate 1-semialdehyde (GSA). The sequence is that of Probable glutamyl-tRNA reductase 3, chloroplastic (HEMA3) from Arabidopsis thaliana (Mouse-ear cress).